The primary structure comprises 307 residues: HPr kinase/phosphorylase (307 aa).

Catalysis depends on residues His136 and Lys157. ATP is bound at residue 151–158 (GESGIGKS). Ser158 serves as a coordination point for Mg(2+). Catalysis depends on Asp175, which acts as the Proton acceptor; for phosphorylation activity. Proton donor; for dephosphorylation activity. Residues 198–207 (LEVRGMGIID) form an important for the catalytic mechanism of both phosphorylation and dephosphorylation region. Glu199 is a Mg(2+) binding site. The active site involves Arg240. The tract at residues 261–266 (PIRPGR) is important for the catalytic mechanism of dephosphorylation.

It belongs to the HPrK/P family. In terms of assembly, homohexamer. The cofactor is Mg(2+).

It catalyses the reaction [HPr protein]-L-serine + ATP = [HPr protein]-O-phospho-L-serine + ADP + H(+). The enzyme catalyses [HPr protein]-O-phospho-L-serine + phosphate + H(+) = [HPr protein]-L-serine + diphosphate. Functionally, catalyzes the ATP- as well as the pyrophosphate-dependent phosphorylation of a specific serine residue in HPr, a phosphocarrier protein of the phosphoenolpyruvate-dependent sugar phosphotransferase system (PTS). HprK/P also catalyzes the pyrophosphate-producing, inorganic phosphate-dependent dephosphorylation (phosphorolysis) of seryl-phosphorylated HPr (P-Ser-HPr). The two antagonistic activities of HprK/P are regulated by several intracellular metabolites, which change their concentration in response to the absence or presence of rapidly metabolisable carbon sources (glucose, fructose, etc.) in the growth medium. Therefore, by controlling the phosphorylation state of HPr, HPrK/P is a sensor enzyme that plays a major role in the regulation of carbon metabolism and sugar transport: it mediates carbon catabolite repression (CCR), and regulates PTS-catalyzed carbohydrate uptake and inducer exclusion. The polypeptide is HPr kinase/phosphorylase (Clostridium novyi (strain NT)).